Reading from the N-terminus, the 180-residue chain is Signal peptidase complex subunit 2 (180 aa).

Over 1–45 (MTDEPVKVVNKWDGPTVKNALDEVVKKILNDKVGWTESHNLMNLR) the chain is Cytoplasmic. The chain crosses the membrane as a helical span at residues 46–66 (LLISFIGVAFSAFACGYDYYE). Over 67-72 (PFPKSK) the chain is Lumenal. The helical transmembrane segment at 73–93 (IVLAVCSVSYFICMGILQMYQ) threads the bilayer. Topologically, residues 94–180 (WYVEKDCIYE…LYNRLIRSEQ (87 aa)) are cytoplasmic.

It belongs to the SPCS2 family. Component of the signal peptidase complex (SPC) composed of a catalytic subunit sec-11 and three accessory subunits spcs-1, spcs-2 and spcs-3. The complex induces a local thinning of the ER membrane which is used to measure the length of the signal peptide (SP) h-region of protein substrates. This ensures the selectivity of the complex towards h-regions shorter than 18-20 amino acids.

It is found in the endoplasmic reticulum membrane. Its function is as follows. Component of the signal peptidase complex (SPC) which catalyzes the cleavage of N-terminal signal sequences from nascent proteins as they are translocated into the lumen of the endoplasmic reticulum. Enhances the enzymatic activity of SPC and facilitates the interactions between different components of the translocation site. In Caenorhabditis elegans, this protein is Signal peptidase complex subunit 2.